Here is a 149-residue protein sequence, read N- to C-terminus: Macrodomain Ter protein (149 aa).

The protein belongs to the MatP family. As to quaternary structure, homodimer.

Its subcellular location is the cytoplasm. Required for spatial organization of the terminus region of the chromosome (Ter macrodomain) during the cell cycle. Prevents early segregation of duplicated Ter macrodomains during cell division. Binds specifically to matS, which is a 13 bp signature motif repeated within the Ter macrodomain. The protein is Macrodomain Ter protein of Vibrio parahaemolyticus serotype O3:K6 (strain RIMD 2210633).